We begin with the raw amino-acid sequence, 355 residues long: Uroporphyrinogen decarboxylase (355 aa).

Residues 36 to 40 (RQAGR), aspartate 85, tyrosine 160, serine 215, and histidine 334 contribute to the substrate site.

This sequence belongs to the uroporphyrinogen decarboxylase family. As to quaternary structure, homodimer.

Its subcellular location is the cytoplasm. It catalyses the reaction uroporphyrinogen III + 4 H(+) = coproporphyrinogen III + 4 CO2. It functions in the pathway porphyrin-containing compound metabolism; protoporphyrin-IX biosynthesis; coproporphyrinogen-III from 5-aminolevulinate: step 4/4. Its function is as follows. Catalyzes the decarboxylation of four acetate groups of uroporphyrinogen-III to yield coproporphyrinogen-III. This Rhodococcus jostii (strain RHA1) protein is Uroporphyrinogen decarboxylase.